We begin with the raw amino-acid sequence, 160 residues long: Endoribonuclease YbeY (160 aa).

The Zn(2+) site is built by H124, H128, and H134.

The protein belongs to the endoribonuclease YbeY family. Zn(2+) serves as cofactor.

Its subcellular location is the cytoplasm. Its function is as follows. Single strand-specific metallo-endoribonuclease involved in late-stage 70S ribosome quality control and in maturation of the 3' terminus of the 16S rRNA. The chain is Endoribonuclease YbeY from Jannaschia sp. (strain CCS1).